The sequence spans 123 residues: Ribosome-binding factor A (123 aa).

Belongs to the RbfA family. As to quaternary structure, monomer. Binds 30S ribosomal subunits, but not 50S ribosomal subunits or 70S ribosomes.

Its subcellular location is the cytoplasm. One of several proteins that assist in the late maturation steps of the functional core of the 30S ribosomal subunit. Associates with free 30S ribosomal subunits (but not with 30S subunits that are part of 70S ribosomes or polysomes). Required for efficient processing of 16S rRNA. May interact with the 5'-terminal helix region of 16S rRNA. The chain is Ribosome-binding factor A from Chlorobium chlorochromatii (strain CaD3).